Reading from the N-terminus, the 338-residue chain is Ketol-acid reductoisomerase (NADP(+)) (338 aa).

The KARI N-terminal Rossmann domain occupies 1–181 (MKVYYENDAD…GGTKAGVIET (181 aa)). NADP(+)-binding positions include 24-27 (FGSQ), Lys-47, Ser-50, Ser-52, and 82-85 (DQVQ). The active site involves His-107. Gly-133 lines the NADP(+) pocket. Residues 182–327 (NFKDETETDL…EKLRGMMSWL (146 aa)) form the KARI C-terminal knotted domain. Residues Asp-190, Glu-194, Glu-226, and Glu-230 each contribute to the Mg(2+) site. Residue Ser-251 participates in substrate binding.

Belongs to the ketol-acid reductoisomerase family. Requires Mg(2+) as cofactor.

The enzyme catalyses (2R)-2,3-dihydroxy-3-methylbutanoate + NADP(+) = (2S)-2-acetolactate + NADPH + H(+). The catalysed reaction is (2R,3R)-2,3-dihydroxy-3-methylpentanoate + NADP(+) = (S)-2-ethyl-2-hydroxy-3-oxobutanoate + NADPH + H(+). It participates in amino-acid biosynthesis; L-isoleucine biosynthesis; L-isoleucine from 2-oxobutanoate: step 2/4. The protein operates within amino-acid biosynthesis; L-valine biosynthesis; L-valine from pyruvate: step 2/4. In terms of biological role, involved in the biosynthesis of branched-chain amino acids (BCAA). Catalyzes an alkyl-migration followed by a ketol-acid reduction of (S)-2-acetolactate (S2AL) to yield (R)-2,3-dihydroxy-isovalerate. In the isomerase reaction, S2AL is rearranged via a Mg-dependent methyl migration to produce 3-hydroxy-3-methyl-2-ketobutyrate (HMKB). In the reductase reaction, this 2-ketoacid undergoes a metal-dependent reduction by NADPH to yield (R)-2,3-dihydroxy-isovalerate. The protein is Ketol-acid reductoisomerase (NADP(+)) of Chloroherpeton thalassium (strain ATCC 35110 / GB-78).